A 246-amino-acid chain; its full sequence is MGVALWLCPKRNTPTYDKLITVMSSLNTLFPGSPPKFEPHITITTNISLDLADQSKTKDDVDRILSASAVAMNSLPKNHESLVKLGNVNSQRKFFKKLYFEVEKDPNLVSFARIIRELFVIVPQDIEKENIKQNPQLYTKDNNGNTIRRKPSKKKSKTTEVKEFDTSFIRQAAAYKAAEWSVQEFDPHISLVYSDLWPLHSALWRNINTRISDIDWDIEWEFGVLKLVLCEGDVNDWVVLGSVDIH.

His40 functions as the Proton donor/acceptor in the catalytic mechanism. A substrate-binding site is contributed by Thr42. Residues 133–146 (QNPQLYTKDNNGNT) show a composition bias toward polar residues. The interval 133–159 (QNPQLYTKDNNGNTIRRKPSKKKSKTT) is disordered. Residues 147-156 (IRRKPSKKKS) are compositionally biased toward basic residues. The active-site Proton donor/acceptor is His188. 2 residues coordinate substrate: Ser190 and Tyr193.

It belongs to the 2H phosphoesterase superfamily. CPD1 family.

It is found in the golgi apparatus. The catalysed reaction is a nucleoside 2',3'-cyclic phosphate + H2O = a nucleoside 2'-phosphate + H(+). Functionally, involved in the metabolism of ADP-ribose 1',2'-cyclic phosphate which is produced as a consequence of tRNA splicing. This chain is 2',3'-cyclic-nucleotide 3'-phosphodiesterase (CPD1), found in Candida albicans (strain SC5314 / ATCC MYA-2876) (Yeast).